A 75-amino-acid chain; its full sequence is Tautomerase PptA (75 aa).

The active-site Proton acceptor; via imino nitrogen is the P2.

The protein belongs to the 4-oxalocrotonate tautomerase family. PptA subfamily. As to quaternary structure, homodimer.

It localises to the cytoplasm. The protein is Tautomerase PptA of Escherichia coli O139:H28 (strain E24377A / ETEC).